Consider the following 384-residue polypeptide: Soluble hydrogenase, small subunit (384 aa).

Position 194 is an N6-(pyridoxal phosphate)lysine (Lys-194).

This sequence belongs to the class-V pyridoxal-phosphate-dependent aminotransferase family. As to quaternary structure, heterodimer of a large and a small subunit. The cofactor is pyridoxal 5'-phosphate.

The protein resides in the cytoplasm. Soluble hydrogenase catalyzes both production and consumption of hydrogen from suitable artificial electron donors or acceptors. This subunit catalyzes the tritium-exchange activity. The sequence is that of Soluble hydrogenase, small subunit from Synechococcus sp. (strain PCC 6716).